Reading from the N-terminus, the 199-residue chain is VAMP-like protein YKT62 (199 aa).

A Longin domain is found at 7 to 131; sequence LVLKCDPETR…PYLKEASDKF (125 aa). In terms of domain architecture, v-SNARE coiled-coil homology spans 139–199; it reads KLLKIQRELD…KKTNSCCTLL (61 aa). The S-palmitoyl cysteine moiety is linked to residue C195. C196 carries the cysteine methyl ester modification. A lipid anchor (S-geranylgeranyl cysteine) is attached at C196. The propeptide at 197–199 is removed in mature form; sequence TLL.

It belongs to the synaptobrevin family. As to quaternary structure, interacts with SYP41. Core constituent of the SNARE complex required for membrane fusion at the trans-Golgi network.

The protein localises to the cell membrane. Functionally, involved in the secretory pathway. Essential for membrane fusion mediated by either SYP41 or SYP61; triggers the fusion of phospholipid vesicles containing SYP41 or SYP61 and VTI12. This is VAMP-like protein YKT62 from Arabidopsis thaliana (Mouse-ear cress).